Reading from the N-terminus, the 298-residue chain is Formamidopyrimidine-DNA glycosylase (298 aa).

The active-site Schiff-base intermediate with DNA is Pro2. Catalysis depends on Glu3, which acts as the Proton donor. The active-site Proton donor; for beta-elimination activity is Lys58. DNA-binding residues include His106, Arg128, and Lys171. An FPG-type zinc finger spans residues 262-298 (SVYDQEGQPCRTPGCGGTVERVVQAGRSTFYCAACQK). Residue Arg288 is the Proton donor; for delta-elimination activity of the active site.

Belongs to the FPG family. As to quaternary structure, monomer. Zn(2+) serves as cofactor.

The catalysed reaction is Hydrolysis of DNA containing ring-opened 7-methylguanine residues, releasing 2,6-diamino-4-hydroxy-5-(N-methyl)formamidopyrimidine.. The enzyme catalyses 2'-deoxyribonucleotide-(2'-deoxyribose 5'-phosphate)-2'-deoxyribonucleotide-DNA = a 3'-end 2'-deoxyribonucleotide-(2,3-dehydro-2,3-deoxyribose 5'-phosphate)-DNA + a 5'-end 5'-phospho-2'-deoxyribonucleoside-DNA + H(+). In terms of biological role, involved in base excision repair of DNA damaged by oxidation or by mutagenic agents. Acts as a DNA glycosylase that recognizes and removes damaged bases. Has a preference for oxidized purines, such as 7,8-dihydro-8-oxoguanine (8-oxoG). Has AP (apurinic/apyrimidinic) lyase activity and introduces nicks in the DNA strand. Cleaves the DNA backbone by beta-delta elimination to generate a single-strand break at the site of the removed base with both 3'- and 5'-phosphates. The polypeptide is Formamidopyrimidine-DNA glycosylase (mutM) (Agrobacterium fabrum (strain C58 / ATCC 33970) (Agrobacterium tumefaciens (strain C58))).